A 267-amino-acid polypeptide reads, in one-letter code: Phosphonoacetaldehyde hydrolase (267 aa).

The active-site Nucleophile is Asp10. Mg(2+) is bound by residues Asp10 and Ala12. Lys51 serves as the catalytic Schiff-base intermediate with substrate. Asp184 provides a ligand contact to Mg(2+).

It belongs to the HAD-like hydrolase superfamily. PhnX family. Homodimer. Mg(2+) is required as a cofactor.

It carries out the reaction phosphonoacetaldehyde + H2O = acetaldehyde + phosphate + H(+). In terms of biological role, involved in phosphonate degradation. In Paraburkholderia xenovorans (strain LB400), this protein is Phosphonoacetaldehyde hydrolase.